Consider the following 161-residue polypeptide: E3 ubiquitin ligase complex SCF subunit sconC (161 aa).

The interaction with the F-box domain of F-box proteins stretch occupies residues 102–161 (ILAANYLDIKGLLDVGCKTVANMIKGKSPEEIRKTFNIQNDFTPEEEDQIRRENEWAEDR).

The protein belongs to the SKP1 family. As to quaternary structure, component of the SCF (SKP1-CUL1-F-box protein) E3 ubiquitin ligase complexes.

It functions in the pathway protein modification; protein ubiquitination. Its function is as follows. Essential component of the SCF (SKP1-CUL1-F-box protein) E3 ubiquitin ligase complexes, which mediate the ubiquitination and subsequent proteasomal degradation of target proteins. Controls sulfur metabolite repression, probably by mediating the inactivation or degradation of the metR transcription factor. This is E3 ubiquitin ligase complex SCF subunit sconC (sconC) from Aspergillus flavus (strain ATCC 200026 / FGSC A1120 / IAM 13836 / NRRL 3357 / JCM 12722 / SRRC 167).